The primary structure comprises 110 residues: Keratin, type II cytoskeletal 8 (110 aa).

Residues 1 to 12 (MSTSGPRAFSSR) are head. The IF rod domain occupies 1 to 110 (MSTSGPRAFS…LDIEIATYRK (110 aa)). Ser2, Ser4, Ser10, and Ser11 each carry phosphoserine. Arg12 carries the post-translational modification Omega-N-methylarginine. The coil 1A stretch occupies residues 13 to 25 (FASFIDKVRWSLL). Positions 26 to 39 (QQQKSNMDNMFESY) are linker 1. Lys29 participates in a covalent cross-link: Glycyl lysine isopeptide (Lys-Gly) (interchain with G-Cter in SUMO2). Positions 40–79 (INNLRDVDEAYMNKVELESRLEGLTDEINFLRQIHEEEIR) are coil 1B. Residue Lys53 is modified to N6-acetyllysine. Ser80 and Ser85 each carry phosphoserine. The linker 12 stretch occupies residues 80–86 (SLDMDSI). A coil 2 region spans residues 87 to 110 (IAEVRHGDDLRRLALDIEIATYRK). Residues 88-99 (AEVRHGDDLRRL) form a necessary for interaction with PNN region. Lys110 is covalently cross-linked (Glycyl lysine isopeptide (Lys-Gly) (interchain with G-Cter in SUMO2)).

Belongs to the intermediate filament family. As to quaternary structure, heterotetramer of two type I and two type II keratins. Forms a heterodimer with KRT18. Associates with KRT20. Interacts with PNN. When associated with KRT19, interacts with DMD. Interacts with TCHP. Interacts with APEX1. Interacts with GPER1. Interacts with EPPK1. Interacts with PKP1 and PKP2. Post-translationally, O-glycosylated. O-GlcNAcylation at multiple sites increases solubility, and decreases stability by inducing proteasomal degradation. In terms of processing, O-glycosylated (O-GlcNAcylated), in a cell cycle-dependent manner.

It localises to the cytoplasm. It is found in the nucleus. Its subcellular location is the nucleoplasm. The protein localises to the nucleus matrix. Functionally, together with KRT19, helps to link the contractile apparatus to dystrophin at the costameres of striated muscle. The sequence is that of Keratin, type II cytoskeletal 8 from Mesocricetus auratus (Golden hamster).